The sequence spans 277 residues: Putative phosphoenolpyruvate synthase regulatory protein (277 aa).

Position 157 to 164 (157 to 164) interacts with ADP; that stretch reads GVSRCGKT.

The protein belongs to the pyruvate, phosphate/water dikinase regulatory protein family. PSRP subfamily.

The catalysed reaction is [pyruvate, water dikinase] + ADP = [pyruvate, water dikinase]-phosphate + AMP + H(+). The enzyme catalyses [pyruvate, water dikinase]-phosphate + phosphate + H(+) = [pyruvate, water dikinase] + diphosphate. Bifunctional serine/threonine kinase and phosphorylase involved in the regulation of the phosphoenolpyruvate synthase (PEPS) by catalyzing its phosphorylation/dephosphorylation. In Klebsiella pneumoniae (strain 342), this protein is Putative phosphoenolpyruvate synthase regulatory protein.